Reading from the N-terminus, the 222-residue chain is Ribosomal RNA small subunit methyltransferase G (222 aa).

S-adenosyl-L-methionine is bound by residues Gly-80, Leu-85, and Arg-149.

Belongs to the methyltransferase superfamily. RNA methyltransferase RsmG family.

Its subcellular location is the cytoplasm. In terms of biological role, specifically methylates the N7 position of a guanine in 16S rRNA. The chain is Ribosomal RNA small subunit methyltransferase G from Treponema pallidum (strain Nichols).